A 452-amino-acid chain; its full sequence is Probable 1,4-beta-D-glucan cellobiohydrolase A (452 aa).

Residues 1 to 17 (MHQRALLFSALLTAVRA) form the signal peptide. N-linked (GlcNAc...) asparagine glycosylation occurs at asparagine 62. Glutamate 227 functions as the Nucleophile in the catalytic mechanism. The active-site Proton donor is glutamate 232. 4 N-linked (GlcNAc...) asparagine glycosylation sites follow: asparagine 285, asparagine 335, asparagine 402, and asparagine 445.

It belongs to the glycosyl hydrolase 7 (cellulase C) family.

Its subcellular location is the secreted. The enzyme catalyses Hydrolysis of (1-&gt;4)-beta-D-glucosidic linkages in cellulose and cellotetraose, releasing cellobiose from the non-reducing ends of the chains.. Its function is as follows. The biological conversion of cellulose to glucose generally requires three types of hydrolytic enzymes: (1) Endoglucanases which cut internal beta-1,4-glucosidic bonds; (2) Exocellobiohydrolases that cut the disaccharide cellobiose from the non-reducing end of the cellulose polymer chain; (3) Beta-1,4-glucosidases which hydrolyze the cellobiose and other short cello-oligosaccharides to glucose. The sequence is that of Probable 1,4-beta-D-glucan cellobiohydrolase A (cbhA) from Aspergillus niger (strain ATCC MYA-4892 / CBS 513.88 / FGSC A1513).